The primary structure comprises 427 residues: Adenylosuccinate synthetase (427 aa).

Residues 12–18 (GDEGKGK) and 40–42 (GHT) each bind GTP. Catalysis depends on Asp13, which acts as the Proton acceptor. 2 residues coordinate Mg(2+): Asp13 and Gly40. IMP-binding positions include 13–16 (DEGK), 38–41 (NAGH), Thr128, Arg142, Gln223, Thr238, and Arg302. Residue His41 is the Proton donor of the active site. Substrate is bound at residue 298-304 (TTTGRPR). GTP is bound by residues Arg304, 330–332 (KLD), and 412–414 (SVG).

Belongs to the adenylosuccinate synthetase family. As to quaternary structure, homodimer. Mg(2+) serves as cofactor.

It is found in the cytoplasm. The catalysed reaction is IMP + L-aspartate + GTP = N(6)-(1,2-dicarboxyethyl)-AMP + GDP + phosphate + 2 H(+). Its pathway is purine metabolism; AMP biosynthesis via de novo pathway; AMP from IMP: step 1/2. Plays an important role in the de novo pathway of purine nucleotide biosynthesis. Catalyzes the first committed step in the biosynthesis of AMP from IMP. In Carboxydothermus hydrogenoformans (strain ATCC BAA-161 / DSM 6008 / Z-2901), this protein is Adenylosuccinate synthetase.